The chain runs to 387 residues: Mannitol-1-phosphate 5-dehydrogenase (387 aa).

Residue 3–14 (ALHFGAGNIGRG) participates in NAD(+) binding.

This sequence belongs to the mannitol dehydrogenase family.

It carries out the reaction D-mannitol 1-phosphate + NAD(+) = beta-D-fructose 6-phosphate + NADH + H(+). In Yersinia pestis bv. Antiqua (strain Antiqua), this protein is Mannitol-1-phosphate 5-dehydrogenase.